The primary structure comprises 517 residues: Mucin-like protein 3 (517 aa).

Positions 1-29 (MAQPVHSLCSAFGLQCCLLFLLASWGAGA) are cleaved as a signal peptide. Residues 30–448 (TTFQEYQKTG…GENDSFPAWA (419 aa)) are Extracellular-facing. A disordered region spans residues 67–341 (SGQRPPELPK…PTENLGNTTL (275 aa)). Residues 83-93 (QKRHCNTTRHS) show a composition bias toward basic residues. Residue Asn-88 is glycosylated (N-linked (GlcNAc...) asparagine). Residues 105–116 (TIDHKSSTDNHE) show a composition bias toward basic and acidic residues. N-linked (GlcNAc...) asparagine glycosylation is present at Asn-124. Polar residues predominate over residues 169-179 (RKSTTGKSTVT). The segment covering 180–190 (RKSDKTGRPLE) has biased composition (basic and acidic residues). Positions 194-213 (STLDKTSTSSHKTTTSFHNS) are enriched in low complexity. Composition is skewed to polar residues over residues 214-225 (GNSQTKQKSTSF), 232-243 (ASKTTYKTTGTP), and 263-283 (TKTT…QSLA). Basic and acidic residues predominate over residues 305–317 (TENRERTANENKK). An N-linked (GlcNAc...) asparagine glycan is attached at Asn-338. The chain crosses the membrane as a helical span at residues 449-469 (IVIVVLVAVILLLVFLGLIFL). At 470 to 517 (VSYMMRTRRTLTQNTQYNDAEDEGGPNSYPVYLMEQQNLGMGQIPSPR) the chain is on the cytoplasmic side.

Detected in lung, esophagus, stomach, rectum, skin, cervix, testis, kidney, uterus and small intestine. Expressed in pancreas (at protein level).

It localises to the cell membrane. The protein resides in the cytoplasm. In terms of biological role, may modulate NF-kappaB signaling and play a role in cell growth. In Homo sapiens (Human), this protein is Mucin-like protein 3.